A 130-amino-acid polypeptide reads, in one-letter code: Small ribosomal subunit protein uS11 (130 aa).

The protein belongs to the universal ribosomal protein uS11 family. As to quaternary structure, part of the 30S ribosomal subunit. Interacts with proteins S7 and S18. Binds to IF-3.

In terms of biological role, located on the platform of the 30S subunit, it bridges several disparate RNA helices of the 16S rRNA. Forms part of the Shine-Dalgarno cleft in the 70S ribosome. The sequence is that of Small ribosomal subunit protein uS11 from Gloeobacter violaceus (strain ATCC 29082 / PCC 7421).